The sequence spans 433 residues: MFRWLNINKCMSKIIHPYVLKPNNCIHTNWLFKFATLKNENKIFPKKNLNNNILMQNIKVADDGNAICEQLLFSKYDLPYLLKIPVSDLRLIDTGNNNHNPTILIRKDVILLRTGFISCIIRYNETWLFEGSNSVVINAKDLISKNLKKQNNNKFKNCNNDEIVESLCRKRNCTDNGKENMKQINNDEKEELNYLNIINNFYRYNKGKAYFEFLCLDICMQLSIKEYENDLEGINYKIRDIILLQRKEENNELNMLTNKLLRDMMKIKNNLQKLSNLLNALRTNIEKILNNENDMKNMYLTYLNKNPYNNLKDCSDLEILLETHLQLTDELYGQLENVEEKITHYEELMRLNLDYNRNKFILLNAKISFSTLLFSISSVVTSLFGMNLKNFVEDSNYAFIIVSIFVSVWSIIGIYVTKNINTLLKFFDRYNFR.

Residues Thr-257 to Met-298 adopt a coiled-coil conformation. Residues Phe-360–Val-380 form a helical membrane-spanning segment. The Extracellular portion of the chain corresponds to Thr-381–Asn-396. Residues Tyr-397–Thr-417 traverse the membrane as a helical segment. At Lys-418–Arg-433 the chain is on the mitochondrial matrix side.

Belongs to the CorA metal ion transporter (MIT) (TC 1.A.35) family.

It is found in the mitochondrion inner membrane. Its function is as follows. Mitochondrial inner membrane magnesium transporter required for mitochondrial magnesium homeostasis. Involved in the development of the sporozoite in the mosquito vector midgut. This chain is Mitochondrial inner membrane magnesium transporter MIT1, found in Plasmodium berghei (strain Anka).